A 188-amino-acid polypeptide reads, in one-letter code: Elongation factor P-like protein (188 aa).

The protein belongs to the elongation factor P family.

This Alcanivorax borkumensis (strain ATCC 700651 / DSM 11573 / NCIMB 13689 / SK2) protein is Elongation factor P-like protein.